Reading from the N-terminus, the 122-residue chain is Large ribosomal subunit protein uL14c (122 aa).

Belongs to the universal ribosomal protein uL14 family. In terms of assembly, part of the 50S ribosomal subunit.

The protein resides in the plastid. Its subcellular location is the chloroplast. Binds to 23S rRNA. The chain is Large ribosomal subunit protein uL14c from Oenothera biennis (German evening primrose).